Here is a 145-residue protein sequence, read N- to C-terminus: Major pollen allergen Ole e 1 (145 aa).

3 disulfides stabilise this stretch: C19–C90, C22–C131, and C43–C78. An N-linked (GlcNAc...) (complex) asparagine; alternate glycan is attached at N111. The N-linked (GlcNAc...) (high mannose) asparagine; alternate glycan is linked to N111.

The protein belongs to the Ole e I family. In terms of processing, N-glycosylated; contains high mannose (Man(7)-GlcNAc) and partially fucosylated complex glycans (GlcNAc-Man(3)-Xyl-GlcNAc). Complex glycans may contribute to the antigenicity. Exists both in a glycosylated and in a non-glycosylated form. Ole e 1 and Ole e 1.0103 are the only non-glycosylated isoallergens. Post-translationally, a second potential glycosylation site exists at position 50 in cv. Bella de Espana and cv. Hojiblanca. In terms of tissue distribution, expressed in tapetum and pollen grains. Not detected in petals, roots or leaves.

The protein localises to the endoplasmic reticulum. Its subcellular location is the secreted. Functionally, may be involved in recognition between pollen-stigma and pollen tube-style cells. The polypeptide is Major pollen allergen Ole e 1 (Olea europaea (Common olive)).